Consider the following 1544-residue polypeptide: MSGTQSTITDRFPLKKPIRHGSILNRESPTDKKQKVERIASHDFDPTDSSSKKTKSSSEESRSEIYGLVQRCVIIQKDDNGFGLTVSGDNPVFVQSVKEDGAAMRAGVQTGDRIIKVNGTLVTHSNHLEVVKLIKSGSYVALTVQGRPPGSPQIPLADSEVEPSVIGHMSPIMTSPHSPGASGNMERITSPVLMGEENNVVHNQKVEILRKMLQKEQERLQLLQEDYNRTPAQRLLKEIQEAKKHIPQLQEQLSKATGSAQDGAVVTPSRPLGDTLTVSEAETDPGDVLGRTDCSSGDASRPSSDNADSPKSGPKERIYLEENPEKSETIQDTDTQSLVGSPSTRIAPHIIGAEDDDFGTEHEQINGQCSCFQSIELLKSRPAHLAVFLHHVVSQFDPATLLCYLYSDLYKHTNSKETRRIFLEFHQFFLDRSAHLKVSVPDEMSADLEKRRPELIPEDLHRHYIQTMQERVHPEVQRHLEDFRQKRSMGLTLAESELTKLDAERDKDRLTLEKERTCAEQIVAKIEEVLMTAQAVEEDKSSTMQYVILMYMKHLGVKVKEPRNLEHKRGRIGFLPKIKQSMKKDKEGEEKGKRRGFPSILGPPRRPSRHDNSAIGRAMELQKARHPKHLSTPSSVSPEPQDSAKLRQSGLANEGTDAGYLPANSMSSVASGASFSQEGGKENDTGSKQVGETSAPGDTLDGTPRTLNTVFDFPPPPLDQVQEEECEVERVTEHGTPKPFRKFDSVAFGESQSEDEQFENDLETDPPNWQQLVSREVLLGLKPCEIKRQEVINELFYTERAHVRTLKVLDQVFYQRVSREGILSPSELRKIFSNLEDILQLHIGLNEQMKAVRKRNETSVIDQIGEDLLTWFSGPGEEKLKHAAATFCSNQPFALEMIKSRQKKDSRFQTFVQDAESNPLCRRLQLKDIIPTQMQRLTKYPLLLDNIAKYTEWPTEREKVKKAADHCRQILNYVNQAVKEAENKQRLEDYQRRLDTSSLKLSEYPNVEELRNLDLTKRKMIHEGPLVWKVNRDKTIDLYTLLLEDILVLLQKQDDRLVLRCHSKILASTADSKHTFSPVIKLSTVLVRQVATDNKALFVISMSDNGAQIYELVAQTVSEKTVWQDLICRMAASVKEQSTKPIPLPQSTPGEGDNDEEDPSKLKEEQHGISVTGLQSPDRDLGLESTLISSKPQSHSLSTSGKSEVRDLFVAERQFAKEQHTDGTLKEVGEDYQIAIPDSHLPVSEERWALDALRNLGLLKQLLVQQLGLTEKSVQEDWQHFPRYRTASQGPQTDSVIQNSENIKAYHSGEGHMPFRTGTGDIATCYSPRTSTESFAPRDSVGLAPQDSQASNILVMDHMIMTPEMPTMEPEGGLDDSGEHFFDAREAHSDENPSEGDGAVNKEEKDVNLRISGNYLILDGYDPVQESSTDEEVASSLTLQPMTGIPAVESTHQQQHSPQNTHSDGAISPFTPEFLVQQRWGAMEYSCFEIQSPSSCADSQSQIMEYIHKIEADLEHLKKVEESYTILCQRLAGSALTDKHSDKS.

Residues 1–62 form a disordered region; it reads MSGTQSTITD…KTKSSSEESR (62 aa). Serine 2 bears the N-acetylserine mark. Basic and acidic residues predominate over residues 28–45; that stretch reads SPTDKKQKVERIASHDFD. Phosphoserine is present on serine 41. Residues 72–151 enclose the PDZ domain; that stretch reads CVIIQKDDNG…LTVQGRPPGS (80 aa). A coiled-coil region spans residues 194–262; it reads MGEENNVVHN…LSKATGSAQD (69 aa). The tract at residues 247 to 346 is disordered; the sequence is PQLQEQLSKA…SLVGSPSTRI (100 aa). Polar residues-rich tracts occupy residues 249–260 and 293–309; these read LQEQLSKATGSA and DCSS…NADS. At serine 309 the chain carries Phosphoserine. Residues 313–329 are compositionally biased toward basic and acidic residues; that stretch reads GPKERIYLEENPEKSET. Positions 330 to 344 are enriched in polar residues; that stretch reads IQDTDTQSLVGSPST. Serine 341 bears the Phosphoserine mark. An RGSL domain is found at 367–558; sequence GQCSCFQSIE…LMYMKHLGVK (192 aa). The segment at 570-706 is disordered; it reads GRIGFLPKIK…GDTLDGTPRT (137 aa). Residues 582-592 are compositionally biased toward basic and acidic residues; sequence MKKDKEGEEKG. Polar residues predominate over residues 631-640; that stretch reads STPSSVSPEP. Serine 637 is subject to Phosphoserine. Positions 663–676 are enriched in low complexity; sequence ANSMSSVASGASFS. Threonine 736 bears the Phosphothreonine mark. The region spanning 787-977 is the DH domain; sequence KRQEVINELF…RQILNYVNQA (191 aa). In terms of domain architecture, PH spans 1019 to 1132; that stretch reads KMIHEGPLVW…WQDLICRMAA (114 aa). Positions 1138-1149 are enriched in polar residues; that stretch reads STKPIPLPQSTP. The tract at residues 1138–1179 is disordered; the sequence is STKPIPLPQSTPGEGDNDEEDPSKLKEEQHGISVTGLQSPDR. A phosphoserine mark is found at serine 1288, serine 1327, serine 1377, serine 1457, and serine 1541.

In terms of assembly, interacts with GNA12 and GNA13, probably through the RGS-like domain. Interacts with RHOA, PLXNB1 and PLXNB2. Interacts through its PDZ domain with IGF1R beta subunit. Interacts with GCSAM. Found in a complex with ARHGEF11 and ARHGEF12; binding to ARHGEF11 and ARHGEF12 enhances CDC42 GEF activity of PLEKHG4B, and PLEKHG4B, in turn, inhibits ARHGEF11- and ARHGEF12-mediated RHOA activation. Ubiquitously expressed. Isoform 2 is found in jejunum and testis.

The protein resides in the cytoplasm. It is found in the membrane. Its function is as follows. May play a role in the regulation of RhoA GTPase by guanine nucleotide-binding alpha-12 (GNA12) and alpha-13 (GNA13). Acts as guanine nucleotide exchange factor (GEF) for RhoA GTPase and may act as GTPase-activating protein (GAP) for GNA12 and GNA13. The protein is Rho guanine nucleotide exchange factor 12 (ARHGEF12) of Homo sapiens (Human).